The chain runs to 509 residues: Dihydrolipoyl dehydrogenase, mitochondrial (509 aa).

The N-terminal 35 residues, 1 to 35 (MQSWSRVYCSLAKRGHFNRISHGLQGVSSVPLRTY), are a transit peptide targeting the mitochondrion. Lysine 66 carries the N6-acetyllysine; alternate modification. The residue at position 66 (lysine 66) is an N6-succinyllysine; alternate. FAD contacts are provided by residues 71-80 (EKNDTLGGTC) and lysine 89. A disulfide bridge links cysteine 80 with cysteine 85. N6-acetyllysine; alternate is present on residues lysine 122, lysine 132, and lysine 143. N6-succinyllysine; alternate occurs at positions 122, 132, and 143. Glycine 154 is an FAD binding site. N6-succinyllysine occurs at positions 159 and 166. 183 to 185 (TGS) contributes to the FAD binding site. NAD(+)-binding positions include 220–227 (GAGVIGVE) and glutamate 243. N6-succinyllysine occurs at positions 273 and 277. An NAD(+)-binding site is contributed by valine 278. Phosphoserine is present on residues serine 285 and serine 297. Glycine 314 lines the NAD(+) pocket. N6-acetyllysine is present on lysine 346. Residues aspartate 355 and 361 to 364 (MLAH) contribute to the FAD site. Lysine 410 is subject to N6-acetyllysine; alternate. Position 410 is an N6-succinyllysine; alternate (lysine 410). Lysine 417 and lysine 420 each carry N6-acetyllysine. Lysine 430 is subject to N6-succinyllysine. Histidine 487 (proton acceptor) is an active-site residue. A Phosphoserine modification is found at serine 502. Lysine 505 carries the post-translational modification N6-acetyllysine; alternate. Lysine 505 is subject to N6-succinyllysine; alternate.

Belongs to the class-I pyridine nucleotide-disulfide oxidoreductase family. Homodimer. Part of the multimeric pyruvate dehydrogenase complex that contains multiple copies of pyruvate dehydrogenase (subunits PDHA (PDHA1 or PDHA2) and PDHB, E1), dihydrolipoamide acetyltransferase (DLAT, E2) and lipoamide dehydrogenase (DLD, E3). These subunits are bound to an inner core composed of about 48 DLAT and 12 PDHX molecules (by non covalent bonds). The 2-oxoglutarate dehydrogenase complex is composed of OGDH (2-oxoglutarate dehydrogenase; E1), DLST (dihydrolipoamide succinyltransferase; E2), DLD (dihydrolipoamide dehydrogenase; E3) and the assembly factor KGD4. It contains multiple copies of the three enzymatic components (E1, E2 and E3). In the nucleus, the 2-oxoglutarate dehydrogenase complex associates with KAT2A. Interacts with PDHX. The cofactor is FAD. In terms of processing, tyrosine phosphorylated.

It is found in the mitochondrion matrix. It localises to the nucleus. The protein resides in the cell projection. The protein localises to the cilium. Its subcellular location is the flagellum. It is found in the cytoplasmic vesicle. It localises to the secretory vesicle. The protein resides in the acrosome. The catalysed reaction is N(6)-[(R)-dihydrolipoyl]-L-lysyl-[protein] + NAD(+) = N(6)-[(R)-lipoyl]-L-lysyl-[protein] + NADH + H(+). Its function is as follows. Lipoamide dehydrogenase is a component of the glycine cleavage system as well as an E3 component of three alpha-ketoacid dehydrogenase complexes (pyruvate-, alpha-ketoglutarate-, and branched-chain amino acid-dehydrogenase complex). The 2-oxoglutarate dehydrogenase complex is mainly active in the mitochondrion. A fraction of the 2-oxoglutarate dehydrogenase complex also localizes in the nucleus and is required for lysine succinylation of histones: associates with KAT2A on chromatin and provides succinyl-CoA to histone succinyltransferase KAT2A. In monomeric form may have additional moonlighting function as serine protease. Involved in the hyperactivation of spermatazoa during capacitation and in the spermatazoal acrosome reaction. The polypeptide is Dihydrolipoyl dehydrogenase, mitochondrial (DLD) (Cricetulus griseus (Chinese hamster)).